A 155-amino-acid chain; its full sequence is Ribosome maturation factor RimP (155 aa).

Belongs to the RimP family.

It is found in the cytoplasm. Required for maturation of 30S ribosomal subunits. The sequence is that of Ribosome maturation factor RimP from Bacteroides fragilis (strain ATCC 25285 / DSM 2151 / CCUG 4856 / JCM 11019 / LMG 10263 / NCTC 9343 / Onslow / VPI 2553 / EN-2).